The primary structure comprises 541 residues: Presenilin homolog (541 aa).

Composition is skewed to polar residues over residues 1-14 (MAAVNLQASCSSGL) and 43-52 (NNYGSSNQDQ). Disordered regions lie at residues 1 to 52 (MAAV…NQDQ) and 69 to 92 (CGSRPSRLTGGGGGSGGPPTNEME). Residues 1–106 (MAAVNLQASC…LKYGAQHVIK (106 aa)) are Cytoplasmic-facing. A helical transmembrane segment spans residues 107 to 127 (LFVPVSLCMLVVVATINSISF). The Lumenal segment spans residues 128 to 154 (YNSTDVYLLYTPFHEQSPEPSVKFWSA). Asn129 carries N-linked (GlcNAc...) asparagine glycosylation. Residues 155–175 (LANSLILMSVVVVMTFLLIVL) form a helical membrane-spanning segment. The Cytoplasmic segment spans residues 176–182 (YKKRCYR). Residues 183–203 (IIHGWLILSSFMLLFIFTYLY) traverse the membrane as a helical segment. The Lumenal segment spans residues 204–216 (LEELLRAYNIPMD). The helical transmembrane segment at 217–237 (YPTALLIMWNFGVVGMMSIHW) threads the bilayer. The Cytoplasmic portion of the chain corresponds to 238 to 242 (QGPLR). The chain crosses the membrane as a helical span at residues 243–263 (LQQGYLIFVAALMALVFIKYL). Residues 264–265 (PE) lie on the Lumenal side of the membrane. A helical transmembrane segment spans residues 266–286 (WTAWAVLAAISIWDLIAVLSP). Residue Asp279 is part of the active site. Residues 287–453 (RGPLRILVET…QNHPDGQEER (167 aa)) lie on the Cytoplasmic side of the membrane. The tract at residues 320–481 (NTVTPQQSQA…ASSYGDWTTT (162 aa)) is interaction with Mettl2. Residues 327–350 (SQATASSSPSSSNSTTTTRATQNS) show a composition bias toward low complexity. Disordered regions lie at residues 327–379 (SQAT…DGSV) and 421–449 (EVQSTQSGNAQRSNEYRTVTAPDQNHPDG). Polar residues-rich tracts occupy residues 361 to 370 (GQRTGNSHPR) and 421 to 443 (EVQSTQSGNAQRSNEYRTVTAPD). Residues 454–474 (GIKLGLGDFIFYSVLVGKASS) form a helical membrane-spanning segment. The active site involves Asp461. Residues 475–481 (YGDWTTT) lie on the Lumenal side of the membrane. A helical transmembrane segment spans residues 482 to 502 (IACFVAILIGLCLTLLLLAIW). At 503–506 (RKAL) the chain is on the cytoplasmic side. The PAL signature appears at 507–509 (PAL). The segment at residues 507–527 (PALPISITFGLIFCFATSAVV) is an intramembrane region (helical). Topologically, residues 528–541 (KPFMEDLSAKQVFI) are cytoplasmic.

This sequence belongs to the peptidase A22A family. Homodimer. Component of the gamma-secretase complex, a complex composed of a presenilin (Psn) homodimer, nicastrin (Nct), Aph-1 and Pen-2. Interacts with Mettl2. Isoform 2 shows a better interaction with Mettl2 than isoform 1. Post-translationally, cleaved. The cleavage, which probably takes place between the 6th and the 7th transmembrane regions, may be required for activation of the gamma-secretase activity. In terms of tissue distribution, maternally expressed in nurse and follicle cells. In early embryos, expressed in all or most cells and later increases in CNS and epidermal tissues. In larvae, expression is seen in all imaginal disks, brain and optic lobes. In pupae, expression is seen in eye disk and brain.

It is found in the endoplasmic reticulum membrane. The protein localises to the golgi apparatus membrane. Its function is as follows. Probable catalytic subunit of the gamma-secretase complex, an endoprotease complex that catalyzes the intramembrane cleavage of integral membrane proteins such as Notch receptor. Required for S3 cleavage of Notch, which releases activated Notch protein from the cell membrane. Involved in the patterning of the optic lobes. This is Presenilin homolog (Psn) from Drosophila melanogaster (Fruit fly).